The sequence spans 36 residues: Pancreatic polypeptide (36 aa).

Phe-36 is subject to Phenylalanine amide.

Belongs to the NPY family.

The protein resides in the secreted. Its function is as follows. Hormone secreted by pancreatic cells that acts as a regulator of pancreatic and gastrointestinal functions. The polypeptide is Pancreatic polypeptide (ppy) (Rana temporaria (European common frog)).